The sequence spans 475 residues: MWVVGLIGVAVVTILITQYVYKWRNPKTVGVLPPGSMGLPLIGETLQLLSRNPSLDLHPFIKSRIQRYGQIFATNIVGRPIIVTADPQLNNYLFQQEGRAVELWYLDSFQKLFNLEGANRPNAVGHIHKYVRSVYLSLFGVESLKTKLLADIEKTVRKNLIGGTTKGTFDAKHASANMVAVFAAKYLFGHDYEKSKEDVGSIIDNFVQGLLAFPLNVPGTKFHKCMKDKKRLESMITNKLKERIADPNSGQGDFLDQAVKDLNSEFFITETFIVSVTMGALFATVESVSTAIGLAFKFFAEHPWVLDDLKAEHEAVLSKREDRNSPLTWDEYRSMTHTMHFINEVVRLGNVFPGILRKALKDIPYNGYTIPSGWTIMIVTSTLAMNPEIFKDPLAFNPKRWRDIDPETQTKNFMPFGGGTRQCAGAELAKAFFATFLHVLISEYSWKKVKGGSVARTPMLSFEDGIFIEVTKKNK.

The helical transmembrane segment at 3 to 23 (VVGLIGVAVVTILITQYVYKW) threads the bilayer. Cys423 provides a ligand contact to heme.

The protein belongs to the cytochrome P450 family. The cofactor is heme.

The protein localises to the membrane. It catalyses the reaction beta-amyrin + reduced [NADPH--hemoprotein reductase] + O2 = 16alpha-hydroxy-beta-amyrin + oxidized [NADPH--hemoprotein reductase] + H2O + H(+). Its function is as follows. Involved in the biosynthetic pathway of maesasaponins, which are oleanane-type saponins with diverse biological activities. Catalyzes the C-16alpha oxidation of beta-amyrin to form 16alpha-hydroxy-beta-amyrin. This is Beta-amyrin 16-alpha-hydroxylase CYP87D16 from Maesa lanceolata (False assegai).